A 640-amino-acid polypeptide reads, in one-letter code: 1,4-alpha-glucan branching enzyme GlgB (640 aa).

D317 serves as the catalytic Nucleophile. E370 acts as the Proton donor in catalysis.

This sequence belongs to the glycosyl hydrolase 13 family. GlgB subfamily. Monomer.

The catalysed reaction is Transfers a segment of a (1-&gt;4)-alpha-D-glucan chain to a primary hydroxy group in a similar glucan chain.. The protein operates within glycan biosynthesis; glycogen biosynthesis. In terms of biological role, catalyzes the formation of the alpha-1,6-glucosidic linkages in glycogen by scission of a 1,4-alpha-linked oligosaccharide from growing alpha-1,4-glucan chains and the subsequent attachment of the oligosaccharide to the alpha-1,6 position. The chain is 1,4-alpha-glucan branching enzyme GlgB from Nitratidesulfovibrio vulgaris (strain DP4) (Desulfovibrio vulgaris).